Consider the following 572-residue polypeptide: Probable transporter MCH1 (572 aa).

Over residues 1 to 29 (MSSSAPDDTQASRLDADQISTRSSSYASD) the composition is skewed to polar residues. Residues 1–39 (MSSSAPDDTQASRLDADQISTRSSSYASDNDTDSTETRI) form a disordered region. An N-linked (GlcNAc...) asparagine glycan is attached at asparagine 30. 10 helical membrane-spanning segments follow: residues 50–70 (LLAFISANIIALACGSIVVFS), 89–109 (AVAISGSVALYLPISGVGYIC), 116–136 (PLALTGGILFGSGYGLAAGVY), 159–179 (FLMLSFVFVGVATCCLYMAAV), 193–213 (GLALATPITCFGLSPMWLSQA), 232–252 (VFRFFLFLAALTFFMGILGTF), 335–355 (LAFLLIVGPGEAFINNLGTII), 426–446 (FMAFFASMLSIGLLILASGLV), 459–479 (LVGAGYGAIFSLTPLMVTIIW), and 488–508 (YGLIGMLPAAGSTFWGLVYSA). Asparagine 515 is a glycosylation site (N-linked (GlcNAc...) asparagine). Residues 539–559 (PTYWAETITVWIAVGLLLWAW) form a helical membrane-spanning segment.

It belongs to the major facilitator superfamily.

The protein resides in the vacuole membrane. Its function is as follows. Probable transporter. The chain is Probable transporter MCH1 (MCH1) from Gibberella zeae (strain ATCC MYA-4620 / CBS 123657 / FGSC 9075 / NRRL 31084 / PH-1) (Wheat head blight fungus).